Consider the following 198-residue polypeptide: Phosphoheptose isomerase (198 aa).

The SIS domain maps to 34–196; it reads IVEALIRGNK…DDSLFPADHG (163 aa). 49-51 is a substrate binding site; that stretch reads NGG. Zn(2+) contacts are provided by H58 and N62. Residues N62, 91 to 92, 117 to 119, S122, and Q172 contribute to the substrate site; these read ND and STS. Residues Q172 and H180 each coordinate Zn(2+).

The protein belongs to the SIS family. GmhA subfamily. As to quaternary structure, homotetramer. Zn(2+) is required as a cofactor.

The protein resides in the cytoplasm. The enzyme catalyses 2 D-sedoheptulose 7-phosphate = D-glycero-alpha-D-manno-heptose 7-phosphate + D-glycero-beta-D-manno-heptose 7-phosphate. The protein operates within carbohydrate biosynthesis; D-glycero-D-manno-heptose 7-phosphate biosynthesis; D-glycero-alpha-D-manno-heptose 7-phosphate and D-glycero-beta-D-manno-heptose 7-phosphate from sedoheptulose 7-phosphate: step 1/1. Its function is as follows. Catalyzes the isomerization of sedoheptulose 7-phosphate in D-glycero-D-manno-heptose 7-phosphate. The chain is Phosphoheptose isomerase from Alteromonas mediterranea (strain DSM 17117 / CIP 110805 / LMG 28347 / Deep ecotype).